The primary structure comprises 384 residues: 8-amino-7-oxononanoate synthase (384 aa).

Arginine 21 contributes to the substrate binding site. Glycine 108–phenylalanine 109 lines the pyridoxal 5'-phosphate pocket. A substrate-binding site is contributed by histidine 133. 3 residues coordinate pyridoxal 5'-phosphate: serine 179, histidine 207, and threonine 233. Lysine 236 bears the N6-(pyridoxal phosphate)lysine mark. Threonine 352 lines the substrate pocket.

It belongs to the class-II pyridoxal-phosphate-dependent aminotransferase family. BioF subfamily. In terms of assembly, homodimer. It depends on pyridoxal 5'-phosphate as a cofactor.

The enzyme catalyses 6-carboxyhexanoyl-[ACP] + L-alanine + H(+) = (8S)-8-amino-7-oxononanoate + holo-[ACP] + CO2. It participates in cofactor biosynthesis; biotin biosynthesis. Functionally, catalyzes the decarboxylative condensation of pimeloyl-[acyl-carrier protein] and L-alanine to produce 8-amino-7-oxononanoate (AON), [acyl-carrier protein], and carbon dioxide. The protein is 8-amino-7-oxononanoate synthase of Escherichia coli (strain K12 / DH10B).